The primary structure comprises 152 residues: Protein IpgF (152 aa).

Positions 1 to 17 are cleaved as a signal peptide; that stretch reads MSRFVFILLCFIPHLGR.

It belongs to the IagB/IpgF/P19 family.

This chain is Protein IpgF (ipgF), found in Shigella flexneri.